The chain runs to 206 residues: Small ribosomal subunit protein uS4 (206 aa).

Positions 96–156 (GRLDNVVYRM…EKAKKQSRVK (61 aa)) constitute an S4 RNA-binding domain.

Belongs to the universal ribosomal protein uS4 family. In terms of assembly, part of the 30S ribosomal subunit. Contacts protein S5. The interaction surface between S4 and S5 is involved in control of translational fidelity.

Its function is as follows. One of the primary rRNA binding proteins, it binds directly to 16S rRNA where it nucleates assembly of the body of the 30S subunit. With S5 and S12 plays an important role in translational accuracy. This chain is Small ribosomal subunit protein uS4, found in Yersinia enterocolitica serotype O:8 / biotype 1B (strain NCTC 13174 / 8081).